A 182-amino-acid polypeptide reads, in one-letter code: Small ribosomal subunit protein uS4 (182 aa).

Disordered stretches follow at residues 1 to 23 (MGHPKKPRKQYDTPSHPWNADRI) and 158 to 182 (SSVAKQFETQETEEVAAEEEPKDEE). One can recognise an S4 RNA-binding domain in the interval 103–170 (RRLQSLVFKR…AKQFETQETE (68 aa)). Residues 167-182 (QETEEVAAEEEPKDEE) show a composition bias toward acidic residues.

It belongs to the universal ribosomal protein uS4 family. As to quaternary structure, part of the 30S ribosomal subunit. Contacts protein S5. The interaction surface between S4 and S5 is involved in control of translational fidelity.

In terms of biological role, one of the primary rRNA binding proteins, it binds directly to 16S rRNA where it nucleates assembly of the body of the 30S subunit. Its function is as follows. With S5 and S12 plays an important role in translational accuracy. The protein is Small ribosomal subunit protein uS4 of Methanosphaera stadtmanae (strain ATCC 43021 / DSM 3091 / JCM 11832 / MCB-3).